We begin with the raw amino-acid sequence, 89 residues long: Small ribosomal subunit protein uS15 (89 aa).

It belongs to the universal ribosomal protein uS15 family. As to quaternary structure, part of the 30S ribosomal subunit. Forms a bridge to the 50S subunit in the 70S ribosome, contacting the 23S rRNA.

One of the primary rRNA binding proteins, it binds directly to 16S rRNA where it helps nucleate assembly of the platform of the 30S subunit by binding and bridging several RNA helices of the 16S rRNA. Functionally, forms an intersubunit bridge (bridge B4) with the 23S rRNA of the 50S subunit in the ribosome. This chain is Small ribosomal subunit protein uS15, found in Methylobacterium nodulans (strain LMG 21967 / CNCM I-2342 / ORS 2060).